The chain runs to 148 residues: 3-hydroxyacyl-[acyl-carrier-protein] dehydratase FabZ (148 aa).

His-55 is an active-site residue.

Belongs to the thioester dehydratase family. FabZ subfamily.

It is found in the cytoplasm. It carries out the reaction a (3R)-hydroxyacyl-[ACP] = a (2E)-enoyl-[ACP] + H2O. Functionally, involved in unsaturated fatty acids biosynthesis. Catalyzes the dehydration of short chain beta-hydroxyacyl-ACPs and long chain saturated and unsaturated beta-hydroxyacyl-ACPs. The sequence is that of 3-hydroxyacyl-[acyl-carrier-protein] dehydratase FabZ from Haemophilus influenzae (strain ATCC 51907 / DSM 11121 / KW20 / Rd).